A 207-amino-acid polypeptide reads, in one-letter code: MLRGMKVVLTTGNPGKVRELKEGLAPLGWTLLTLADFALRMPKEEGATFLENALLKAAYVAKATGLPALADDSGLEVYALGGEPGVYSARYGGRATDRERNVYLLERMRHLKGEERKARFVAVLVLAYPDGHAEAYEGSVEGVILEAPRGEGGFGYDPLFYVPEAGKTFAEMGLEEKARYSHRGKALRALLEAYKDGPPPREVSKLE.

T11–K16 contacts substrate. D72 acts as the Proton acceptor in catalysis. Position 72 (D72) interacts with Mg(2+). Substrate is bound by residues S73, F154–D157, K177, and H182–R183.

Belongs to the HAM1 NTPase family. As to quaternary structure, homodimer. The cofactor is Mg(2+).

The catalysed reaction is XTP + H2O = XMP + diphosphate + H(+). The enzyme catalyses dITP + H2O = dIMP + diphosphate + H(+). It catalyses the reaction ITP + H2O = IMP + diphosphate + H(+). Its function is as follows. Pyrophosphatase that catalyzes the hydrolysis of nucleoside triphosphates to their monophosphate derivatives, with a high preference for the non-canonical purine nucleotides XTP (xanthosine triphosphate), dITP (deoxyinosine triphosphate) and ITP. Seems to function as a house-cleaning enzyme that removes non-canonical purine nucleotides from the nucleotide pool, thus preventing their incorporation into DNA/RNA and avoiding chromosomal lesions. This is dITP/XTP pyrophosphatase from Thermus thermophilus (strain ATCC BAA-163 / DSM 7039 / HB27).